The following is a 1405-amino-acid chain: DNA-directed RNA polymerase subunit beta' (1405 aa).

Positions 70, 72, 85, and 88 each coordinate Zn(2+). Asp460, Asp462, and Asp464 together coordinate Mg(2+). Cys814, Cys888, Cys895, and Cys898 together coordinate Zn(2+).

Belongs to the RNA polymerase beta' chain family. As to quaternary structure, the RNAP catalytic core consists of 2 alpha, 1 beta, 1 beta' and 1 omega subunit. When a sigma factor is associated with the core the holoenzyme is formed, which can initiate transcription. Requires Mg(2+) as cofactor. It depends on Zn(2+) as a cofactor.

The catalysed reaction is RNA(n) + a ribonucleoside 5'-triphosphate = RNA(n+1) + diphosphate. DNA-dependent RNA polymerase catalyzes the transcription of DNA into RNA using the four ribonucleoside triphosphates as substrates. The chain is DNA-directed RNA polymerase subunit beta' from Shewanella oneidensis (strain ATCC 700550 / JCM 31522 / CIP 106686 / LMG 19005 / NCIMB 14063 / MR-1).